Here is a 135-residue protein sequence, read N- to C-terminus: Large ribosomal subunit protein uL16c (135 aa).

It belongs to the universal ribosomal protein uL16 family. In terms of assembly, part of the 50S ribosomal subunit.

It localises to the plastid. It is found in the chloroplast. In Coffea arabica (Arabian coffee), this protein is Large ribosomal subunit protein uL16c.